The primary structure comprises 232 residues: Putative homeobox protein NANOG2 (232 aa).

The interval 1–39 (MDLPIQDSHDSSTSPKGKQPTTAEKSATKKEDKVPVKKQ) is disordered. Residues 11–25 (SSTSPKGKQPTTAEK) are compositionally biased toward polar residues. Over residues 26–35 (SATKKEDKVP) the composition is skewed to basic and acidic residues. 8 consecutive repeat copies span residues 123–127 (WSNQT), 128–132 (WNNST), 133–137 (WSNQT), 143–147 (WSNHS), 148–152 (WNTQT), 153–157 (WCTQS), 158–162 (WNNQA), and 163–167 (WNSPF). The 8 X repeats starting with a Trp in each unit stretch occupies residues 123–167 (WSNQTWNNSTWSNQTQNIQSWSNHSWNTQTWCTQSWNNQAWNSPF). Residues 123-167 (WSNQTWNNSTWSNQTQNIQSWSNHSWNTQTWCTQSWNNQAWNSPF) form a sufficient for transactivation activity region. Residues 168-232 (YNCGEESLQS…YSMNMQPEDV (65 aa)) form a sufficient for strong transactivation activity region.

It belongs to the Nanog homeobox family.

The protein localises to the nucleus. Functionally, probable transcriptional regulator. The chain is Putative homeobox protein NANOG2 (NANOGP1) from Homo sapiens (Human).